A 556-amino-acid polypeptide reads, in one-letter code: Arginine--tRNA ligase (556 aa).

Residues 132–142 (ANPTGDLHLGH) carry the 'HIGH' region motif.

The protein belongs to the class-I aminoacyl-tRNA synthetase family. Monomer.

The protein resides in the cytoplasm. It catalyses the reaction tRNA(Arg) + L-arginine + ATP = L-arginyl-tRNA(Arg) + AMP + diphosphate. This is Arginine--tRNA ligase from Listeria welshimeri serovar 6b (strain ATCC 35897 / DSM 20650 / CCUG 15529 / CIP 8149 / NCTC 11857 / SLCC 5334 / V8).